We begin with the raw amino-acid sequence, 235 residues long: Leucyl/phenylalanyl-tRNA--protein transferase (235 aa).

It belongs to the L/F-transferase family.

The protein localises to the cytoplasm. It catalyses the reaction N-terminal L-lysyl-[protein] + L-leucyl-tRNA(Leu) = N-terminal L-leucyl-L-lysyl-[protein] + tRNA(Leu) + H(+). The enzyme catalyses N-terminal L-arginyl-[protein] + L-leucyl-tRNA(Leu) = N-terminal L-leucyl-L-arginyl-[protein] + tRNA(Leu) + H(+). It carries out the reaction L-phenylalanyl-tRNA(Phe) + an N-terminal L-alpha-aminoacyl-[protein] = an N-terminal L-phenylalanyl-L-alpha-aminoacyl-[protein] + tRNA(Phe). Functionally, functions in the N-end rule pathway of protein degradation where it conjugates Leu, Phe and, less efficiently, Met from aminoacyl-tRNAs to the N-termini of proteins containing an N-terminal arginine or lysine. The sequence is that of Leucyl/phenylalanyl-tRNA--protein transferase from Cellvibrio japonicus (strain Ueda107) (Pseudomonas fluorescens subsp. cellulosa).